A 423-amino-acid chain; its full sequence is Glutamate-1-semialdehyde 2,1-aminomutase (423 aa).

Residue K266 is modified to N6-(pyridoxal phosphate)lysine.

It belongs to the class-III pyridoxal-phosphate-dependent aminotransferase family. HemL subfamily. As to quaternary structure, homodimer. Pyridoxal 5'-phosphate is required as a cofactor.

The protein localises to the cytoplasm. The catalysed reaction is (S)-4-amino-5-oxopentanoate = 5-aminolevulinate. It functions in the pathway porphyrin-containing compound metabolism; protoporphyrin-IX biosynthesis; 5-aminolevulinate from L-glutamyl-tRNA(Glu): step 2/2. This Desulfovibrio desulfuricans (strain ATCC 27774 / DSM 6949 / MB) protein is Glutamate-1-semialdehyde 2,1-aminomutase.